The primary structure comprises 582 residues: Aspartate--tRNA(Asp/Asn) ligase (582 aa).

Glutamate 177 is an L-aspartate binding site. The tract at residues 201-204 (QLFK) is aspartate. Arginine 223 contacts L-aspartate. Residues 223–225 (RDE) and glutamine 232 each bind ATP. Histidine 447 is an L-aspartate binding site. ATP is bound at residue glutamate 481. Arginine 488 contacts L-aspartate. 533–536 (GLDR) is an ATP binding site.

Belongs to the class-II aminoacyl-tRNA synthetase family. Type 1 subfamily. As to quaternary structure, homodimer.

It localises to the cytoplasm. The enzyme catalyses tRNA(Asx) + L-aspartate + ATP = L-aspartyl-tRNA(Asx) + AMP + diphosphate. Its function is as follows. Aspartyl-tRNA synthetase with relaxed tRNA specificity since it is able to aspartylate not only its cognate tRNA(Asp) but also tRNA(Asn). Reaction proceeds in two steps: L-aspartate is first activated by ATP to form Asp-AMP and then transferred to the acceptor end of tRNA(Asp/Asn). This Chlamydia trachomatis serovar A (strain ATCC VR-571B / DSM 19440 / HAR-13) protein is Aspartate--tRNA(Asp/Asn) ligase.